The following is a 612-amino-acid chain: Probable exonuclease subunit 2 (612 aa).

35-42 (GGNGLGKS) lines the ATP pocket. Coiled-coil stretches lie at residues 163–193 (NQEQ…GQMA) and 288–459 (SRAS…VADL).

It to phage T4 protein GP46. As to quaternary structure, could consist of two subunits: D13 and D12.

Functionally, possible exonuclease that may play a role in viral genome replication, DNA recombination, and host DNA degradation. The protein is Probable exonuclease subunit 2 (D13) of Escherichia phage T5 (Enterobacteria phage T5).